Consider the following 258-residue polypeptide: Pimeloyl-[acyl-carrier protein] methyl ester esterase (258 aa).

Residues 16 to 242 (LVLLHGWGLN…AAHAPFISHP (227 aa)) form the AB hydrolase-1 domain. Substrate is bound by residues W22, 82-83 (SM), and 143-147 (FLALQ). The active-site Nucleophile is the S82. Active-site residues include D207 and H235. H235 lines the substrate pocket.

This sequence belongs to the AB hydrolase superfamily. Carboxylesterase BioH family. As to quaternary structure, monomer.

Its subcellular location is the cytoplasm. The enzyme catalyses 6-carboxyhexanoyl-[ACP] methyl ester + H2O = 6-carboxyhexanoyl-[ACP] + methanol + H(+). It functions in the pathway cofactor biosynthesis; biotin biosynthesis. In terms of biological role, the physiological role of BioH is to remove the methyl group introduced by BioC when the pimeloyl moiety is complete. It allows to synthesize pimeloyl-ACP via the fatty acid synthetic pathway through the hydrolysis of the ester bonds of pimeloyl-ACP esters. In Yersinia pseudotuberculosis serotype IB (strain PB1/+), this protein is Pimeloyl-[acyl-carrier protein] methyl ester esterase.